Here is a 300-residue protein sequence, read N- to C-terminus: Ubiquitin carboxyl-terminal hydrolase 2 (300 aa).

One can recognise a UCH catalytic domain in the interval 2 to 220; sequence SWTTIESDAG…IRFNLMVICK (219 aa). The active-site Nucleophile is C83. H159 acts as the Proton donor in catalysis. The ULD domain occupies 261 to 290; that stretch reads NFVGLFVELSKLLVKDRIDKNTWNSTLETA.

The protein belongs to the peptidase C12 family. As to quaternary structure, component of the 26S proteasome. Interacts with rpn10.

The protein resides in the nucleus. It catalyses the reaction Thiol-dependent hydrolysis of ester, thioester, amide, peptide and isopeptide bonds formed by the C-terminal Gly of ubiquitin (a 76-residue protein attached to proteins as an intracellular targeting signal).. Ubiquitin-protein hydrolase is involved both in the processing of ubiquitin precursors and of ubiquitinated proteins. This enzyme is a thiol protease that recognizes and hydrolyzes a peptide bond at the C-terminal glycine of ubiquitin. The sequence is that of Ubiquitin carboxyl-terminal hydrolase 2 (uch2) from Schizosaccharomyces pombe (strain 972 / ATCC 24843) (Fission yeast).